The following is a 387-amino-acid chain: MNMKKGVSQLTLQTLSLVAGFMAWSIISPLMPFISQDVDISPGQISVILAIPVILGSVLRVPFGYLTNIVGAKWVFFWSFIVLLLPIFLLGQAQSPGMLMLSGFFLGIGGAIFSVGVTSVPKYFSKDKVGLANGIYGVGNIGTAVSSFCAPVLAGAIGWQNTVRSYLIILSIFAILMFFLGDKNEPKVKIPLMAQVKDLSKNYKLYYLSLWYFITFGAFVAFGIFLPNFLVDHFSIDKVDAGIRSGIFIALATFLRPVGGVIGDKFNAVQALIIDFVIMIIGALILSLSSHIVLFTIGCLAISICAGIGNGLIFKLAPSYFSKEAGSANGIVSMMGGLGGFFPPLVITFVTSITGSSHLAFFFLAIFGVIALITMIHLNKKEKAIRI.

Transmembrane regions (helical) follow at residues Thr14–Ile34, Ile45–Tyr65, Ile69–Leu89, Gly97–Val117, Gly137–Ile157, Asn161–Gly181, Trp211–Val231, Gly246–Phe266, Ala268–Leu288, Leu294–Phe314, Gly330–Val350, and His358–Leu378.

It belongs to the major facilitator superfamily. Nitrate/nitrite porter (TC 2.A.1.8) family.

Its subcellular location is the cell membrane. Probably required for nitrate uptake under anoxic conditions. Also possibly involved in excretion of nitrite produced by the dissimilatory reduction of nitrate. The chain is Probable nitrate transporter NarT (narT) from Staphylococcus epidermidis (strain ATCC 35984 / DSM 28319 / BCRC 17069 / CCUG 31568 / BM 3577 / RP62A).